The primary structure comprises 641 residues: Raffinose carrier protein (641 aa).

The tract at residues 1-506 is permease; sequence MQEEHNYKWV…GQVIPLAQVN (506 aa). Transmembrane regions (helical) follow at residues 25 to 45, 57 to 77, 93 to 113, 120 to 140, 168 to 188, 201 to 221, 253 to 273, 288 to 308, 317 to 337, 342 to 362, 394 to 414, and 429 to 449; these read AFYS…LFDT, LVTL…PFIG, WVVV…TNLG, AMIY…FYSF, LGST…VIFF, WFIF…GVGL, LLWA…LGSL, FSIL…LFPV, GVFA…TIAG, LVLL…LVVL, FGGA…GMTT, and FKLT…GIFS. Residues 507–611 enclose the PTS EIIA type-1 domain; the sequence is DPTFAAGTLG…DDTVIMTVTN (105 aa). Residue histidine 559 is modified to Phosphohistidine; by HPr.

The protein in the N-terminal section; belongs to the sodium:galactoside symporter (TC 2.A.2) family.

Its subcellular location is the cell membrane. The chain is Raffinose carrier protein (rafP) from Pediococcus pentosaceus.